The sequence spans 1148 residues: Transcription-repair-coupling factor (1148 aa).

In terms of domain architecture, Helicase ATP-binding spans aspartate 615–isoleucine 776. An ATP-binding site is contributed by glycine 628–threonine 635. The DEEH box motif lies at aspartate 729–histidine 732. The Helicase C-terminal domain maps to valine 798–glutamate 951.

In the N-terminal section; belongs to the UvrB family. It in the C-terminal section; belongs to the helicase family. RecG subfamily. In terms of assembly, monomer. Interacts with UvrA and RNAP.

It is found in the cytoplasm. Functionally, couples transcription and DNA repair by recognizing RNA polymerase (RNAP) stalled at DNA lesions. Mediates ATP-dependent release of RNAP and its truncated transcript from the DNA, and recruitment of nucleotide excision repair machinery to the damaged site. Can also dissociate RNAP that is blocked by low concentration of nucleoside triphosphates or by physical obstruction, such as bound proteins. In addition, can rescue arrested complexes by promoting forward translocation. Has ATPase activity, which is required for removal of stalled RNAP, but seems to lack helicase activity. May act through a translocase activity that rewinds upstream DNA, leading either to translocation or to release of RNAP when the enzyme active site cannot continue elongation. This is Transcription-repair-coupling factor from Escherichia coli (strain K12).